The sequence spans 121 residues: MIEYLILTCLAISVTFNMLGSIALHRFPDVYTRLHGATKCTTFGTIFATFAVVIFALARLNETRNPKYLQMALHSLIALLALLLTNPVGAHAIARASHLSGYLPKRAVVDAYLERRREKDE.

Belongs to the UPF0091 family.

This chain is UPF0091 protein PH1428, found in Pyrococcus horikoshii (strain ATCC 700860 / DSM 12428 / JCM 9974 / NBRC 100139 / OT-3).